A 580-amino-acid chain; its full sequence is MSSCRYNGGVMRPLSNLSSSRRNLHEMDSEAQPLQPPASVVGGGGGASSPSAAAAASSSAPEIVVSKPEHNNSNNLALYGTGGGGSTGGGGGGGGGGGGSGHGSSSGTKSSKKKNQNIGYKLGHRRALFEKRKRLSDYALIFGMFGIVVMVIETELSWGAYDKASLYSLALKCLISLSTIILLGLIIVYHAREIQLFMVDNGADDWRIAMTYERIFFICLEILVCAIHPIPGNYTFTWTARLAFSYAPSTTTADVDIILSIPMFLRLYLIARVMLLHSKLFTDASSRSIGALNKINFNTRFVMKTLMTICPGTVLLVFSISLWIIAAWTVRACERYHDQQDVTSNFLGAMWLISITFLSIGYGDMVPNTYCGKGVCLLTGIMGAGCTALVVAVVARKLELTKAEKHVHNFMMDTQLTKRVKNAAANVLRETWLIYKNTKLVKKIDHAKVRKHQRKFLQAIHQLRSVKMEQRKLNDQANTLVDLAKTQNIMYDMISDLNERSEDFEKRIVTLETKLETLIGSIHALPGLISQTIRQQQRDFIETQMENYDKHVTYNAERSRSSSRRRRSSSTAPPTSSESS.

Disordered regions lie at residues 1-68 (MSSC…VSKP) and 88-116 (GGGG…KKNQ). The segment covering 48-61 (SSPSAAAAASSSAP) has biased composition (low complexity). Residues 88–104 (GGGGGGGGGGGGSGHGS) show a composition bias toward gly residues. The chain crosses the membrane as a helical span at residues 140–160 (LIFGMFGIVVMVIETELSWGA). A Phosphotyrosine modification is found at tyrosine 161. Residues 169 to 189 (LALKCLISLSTIILLGLIIVY) traverse the membrane as a helical segment. The helical transmembrane segment at 215 to 235 (IFFICLEILVCAIHPIPGNYT) threads the bilayer. Residues 257–277 (IILSIPMFLRLYLIARVMLLH) traverse the membrane as a helical segment. A helical transmembrane segment spans residues 306-326 (LMTICPGTVLLVFSISLWIIA). Residues 346–366 (FLGAMWLISITFLSIGYGDMV) constitute an intramembrane region (pore-forming). Residues 375–395 (VCLLTGIMGAGCTALVVAVVA) traverse the membrane as a helical segment. Residues 413–489 (DTQLTKRVKN…LVDLAKTQNI (77 aa)) are calmodulin-binding. Residues 551 to 560 (HVTYNAERSR) are compositionally biased toward basic and acidic residues. The interval 551 to 580 (HVTYNAERSRSSSRRRRSSSTAPPTSSESS) is disordered. The segment covering 569-580 (SSTAPPTSSESS) has biased composition (low complexity).

This sequence belongs to the potassium channel KCNN family. KCa2.2/KCNN2 subfamily. As to quaternary structure, homodimer. Heteromultimer with KCNN1 and KCNN3. The complex is composed of 4 channel subunits each of which binds to a calmodulin subunit which regulates the channel activity through calcium-binding. Interacts (via N-terminal domain) with MPP2. In terms of tissue distribution, brain.

The protein localises to the membrane. It is found in the cytoplasm. Its subcellular location is the myofibril. It localises to the sarcomere. The protein resides in the z line. It carries out the reaction K(+)(in) = K(+)(out). Inhibited by bee venom neurotoxin apamin. Inhibited by UCL 1684 and tetraethylammonium (TEA). Small conductance calcium-activated potassium channel that mediates the voltage-independent transmembrane transfer of potassium across the cell membrane through a constitutive interaction with calmodulin which binds the intracellular calcium allowing its opening. The current is characterized by a voltage-independent activation, an intracellular calcium concentration increase-dependent activation and a single-channel conductance of about 3 picosiemens. Also presents an inwardly rectifying current, thus reducing its already small outward conductance of potassium ions, which is particularly the case when the membrane potential displays positive values, above + 20 mV. The inward rectification could be due to a blockade of the outward current by intracellular divalent cations such as calcium and magnesium and could also be due to an intrinsic property of the channel pore, independent of intracellular divalent ions. There are three positively charged amino acids in the S6 transmembrane domain, close to the pore, that collectively control the conductance and rectification through an electrostatic mechanism. Additionally, electrostatic contributions from these residues also play an important role in determining the intrinsic open probability of the channel in the absence of calcium, affecting the apparent calcium affinity for activation. Forms an heteromeric complex with calmodulin, which is constitutively associated in a calcium-independent manner. Channel opening is triggered when calcium binds the calmodulin resulting in a rotary movement leading to the formation of the dimeric complex to open the gate. Plays a role in the repolarization phase of cardiac action potential. This is Small conductance calcium-activated potassium channel protein 2 from Rattus norvegicus (Rat).